Consider the following 418-residue polypeptide: MTLPNKAALVGLAHTLSEQVKRYLVTADETKSPEDHKLCIEGERTPSSTEHAQAWEIVRTCDRIGSLVHGPVPWLLSNALSHLDSACLAAATQLNLQDIIVDGPSPTSLDTIVTATGVSEDLLRRILRGCAQRFIFEEVAPDQYAHTDASKMLRVTGIHALVGFSCDEVMRSAAYFSNFLQQTKGKPPSWNVPSPFSLAFDPTKGLFDYYSTVDEVRGRRFDLGMGGTEATKPLVEEMFDFSSLPEGSTVVDVGGGRGHLSRRVSQKHPHLRFIVQDLPAVIHGVEDTDKVTMMEHDIRRRNPVRGADVYLLRSILHDYPDAACVEILSNIVTAMDPSKSRILLDEMIMPDLLAQDSQRFMNQIDMTVVLTLNGKERSTKEWNSLITMVDNRLETEKIWWRKGEEGSHWGVQQLRLRK.

A propeptide spanning residues 1 to 41 (MTLPNKAALVGLAHTLSEQVKRYLVTADETKSPEDHKLCIE) is cleaved from the precursor. 170 to 176 (MRSAAYF) is a substrate binding site. Residues 206–225 (LFDYYSTVDEVRGRRFDLGM) are substrate binding. S-adenosyl-L-methionine-binding positions include 254–255 (GG), Asp277, 297–298 (DI), and Arg313. The active-site Proton acceptor is the His317.

Belongs to the class I-like SAM-binding methyltransferase superfamily. Cation-independent O-methyltransferase family. COMT subfamily.

It catalyses the reaction sterigmatocystin + S-adenosyl-L-methionine = 8-O-methylsterigmatocystin + S-adenosyl-L-homocysteine + H(+). The catalysed reaction is dihydrosterigmatocystin + S-adenosyl-L-methionine = 8-O-methyldihydrosterigmatocystin + S-adenosyl-L-homocysteine + H(+). It functions in the pathway mycotoxin biosynthesis; aflatoxin biosynthesis. Functionally, involved in the conversion of sterigmatocystin to O-methylsterigmatocystin (OMST) and dihydrosterigmatocystin to dihydro-o-methylsterigmatocystin in the aflatoxin biosynthesis pathway. The chain is Sterigmatocystin 8-O-methyltransferase (omtA) from Aspergillus flavus (strain ATCC 200026 / FGSC A1120 / IAM 13836 / NRRL 3357 / JCM 12722 / SRRC 167).